The chain runs to 145 residues: Large ribosomal subunit protein uL15 (145 aa).

The segment covering 1–13 (MNLHELKYNEGAR) has biased composition (basic and acidic residues). The segment at 1 to 56 (MNLHELKYNEGARKEKHRVGRGHAAGKGKQAGKGQSGQLKRTGSKPGFEGGQNPWY) is disordered. Positions 14-26 (KEKHRVGRGHAAG) are enriched in basic residues.

This sequence belongs to the universal ribosomal protein uL15 family. In terms of assembly, part of the 50S ribosomal subunit.

Its function is as follows. Binds to the 23S rRNA. In Mycoplasma mobile (strain ATCC 43663 / 163K / NCTC 11711) (Mesomycoplasma mobile), this protein is Large ribosomal subunit protein uL15.